The primary structure comprises 264 residues: Late embryogenesis abundant protein D-34 (264 aa).

A compositionally biased stretch (low complexity) spans 1–16 (MSQGQPRRPQQPAGQG). The interval 1–23 (MSQGQPRRPQQPAGQGENQEPIK) is disordered. 3 consecutive SMP domains span residues 22 to 76 (IKYG…RNEQ), 138 to 194 (ITIG…AHNA), and 203 to 261 (IKLN…LNEN).

The protein belongs to the LEA type SMP family.

In terms of biological role, LEA proteins are late embryonic proteins abundant in higher plant seed embryos. There are two subsets of LEA proteins (5a and 5b), the first ones are expressed when the cotyledon weight reach 80 mg and the second set are expressed above 100 mg. The function of those proteins is not known. This chain is Late embryogenesis abundant protein D-34, found in Gossypium hirsutum (Upland cotton).